Here is a 160-residue protein sequence, read N- to C-terminus: V-type proton ATPase subunit c (160 aa).

The Lumenal portion of the chain corresponds to 1 to 6 (MSDLCP). A helical membrane pass occupies residues 7-27 (VYAPFFGSIGCAAAIVFTCFG). Over 28–53 (ASYGTAKSGVGICATSVTRPDLLVKN) the chain is Cytoplasmic. The helical transmembrane segment at 54–74 (VVPVVMAGIIAIYGLVVSVLV) threads the bilayer. The Lumenal segment spans residues 75–90 (SDSLSQKQALYTGFIQ). A helical membrane pass occupies residues 91–111 (LGAGLSVGLSGLAAGFAIGIV). Residues 112 to 129 (GDAGVRGTAQQPRLFVGM) lie on the Cytoplasmic side of the membrane. A helical membrane pass occupies residues 130–150 (ILILIFAEVLGLYGLIVALLL). The Lumenal segment spans residues 151 to 160 (NSRASQDVTC).

This sequence belongs to the V-ATPase proteolipid subunit family. V-ATPase is a heteromultimeric enzyme composed of a peripheral catalytic V1 complex (components A to H) attached to an integral membrane V0 proton pore complex (components: a, c, c', c'', d, e, f and VOA1). The decameric c-ring forms the proton-conducting pore, and is composed of eight proteolipid subunits c, one subunit c' and one subunit c''.

It is found in the vacuole membrane. Functionally, proton-conducting pore forming subunit of the V0 complex of vacuolar(H+)-ATPase (V-ATPase), a multisubunit enzyme composed of a peripheral complex (V1) that hydrolyzes ATP and a membrane integral complex (V0) that translocates protons. V-ATPase is responsible for acidifying and maintaining the pH of intracellular compartments. The chain is V-type proton ATPase subunit c (VMA3) from Candida tropicalis (Yeast).